We begin with the raw amino-acid sequence, 41 residues long: NKTNLKQLKAEAARKKAXMQDMXTSVKVEPLXAXXNGAXRM.

Inhibits trypsin and the toxin proteases PR1 and PR2 of M.anisopliae. Does not inhibit chymotrypsin, subtilisin Carlsberg, proteinase K and porcine pancreatic elastase. In Galleria mellonella (Greater wax moth), this protein is Inducible serine protease inhibitor 3.